Consider the following 355-residue polypeptide: Heavy metal-associated isoprenylated plant protein 7 (355 aa).

Over residues 1–58 (MGEEEKKPEAAEEKKMEEKKPEEKKEGEDKKVDAEKKGEDSDKKPQEGESNKDSKEDS) the composition is skewed to basic and acidic residues. Residues 1–74 (MGEEEKKPEA…APAPPPPPQE (74 aa)) form a disordered region. Positions 63–73 (PEAPAPPPPPQ) are enriched in pro residues. 2 consecutive HMA domains span residues 72-136 (PQEV…HRQV) and 170-234 (VVTV…KHAA). Positions 83 and 86 each coordinate a metal cation. Positions 132–157 (THRQVQLLSPIPPPPPPPEKKAEEDK) are disordered. Residues C181 and C184 each coordinate a metal cation. Positions 235-308 (IMKIDPPPPP…GGGEEEGKVV (74 aa)) are disordered. Positions 254 to 293 (EGEKKEEEKGEGESKGEEGKDDKAKTDEEKKEGDGGKGEG) are enriched in basic and acidic residues. The residue at position 352 (C352) is a Cysteine methyl ester. C352 is lipidated: S-farnesyl cysteine. The propeptide at 353–355 (TVM) is removed in mature form.

This sequence belongs to the HIPP family. In terms of processing, efficiently farnesylated in vitro.

In terms of biological role, heavy-metal-binding protein. Binds zinc, copper and nickel in a reversible manner. The polypeptide is Heavy metal-associated isoprenylated plant protein 7 (Arabidopsis thaliana (Mouse-ear cress)).